A 511-amino-acid polypeptide reads, in one-letter code: Apolipoprotein N-acyltransferase (511 aa).

6 helical membrane passes run 24–44, 58–78, 90–110, 125–145, 163–183, and 192–212; these read LALA…LLYL, GWWY…VSIH, FLML…AWLW, LAFA…LTGF, VPVG…ALLV, and GASL…GLYL. Residues 230–470 enclose the CN hydrolase domain; it reads IQGNIAQELK…QGILRGEVIP (241 aa). E269 (proton acceptor) is an active-site residue. Residue K330 is part of the active site. C382 functions as the Nucleophile in the catalytic mechanism. A helical transmembrane segment spans residues 482-502; it reads VWPLAGLAGVLLLWALLGRQL.

This sequence belongs to the CN hydrolase family. Apolipoprotein N-acyltransferase subfamily.

The protein localises to the cell inner membrane. It catalyses the reaction N-terminal S-1,2-diacyl-sn-glyceryl-L-cysteinyl-[lipoprotein] + a glycerophospholipid = N-acyl-S-1,2-diacyl-sn-glyceryl-L-cysteinyl-[lipoprotein] + a 2-acyl-sn-glycero-3-phospholipid + H(+). It participates in protein modification; lipoprotein biosynthesis (N-acyl transfer). Catalyzes the phospholipid dependent N-acylation of the N-terminal cysteine of apolipoprotein, the last step in lipoprotein maturation. In Pseudomonas aeruginosa (strain UCBPP-PA14), this protein is Apolipoprotein N-acyltransferase.